The following is a 198-amino-acid chain: Putative 3-methyladenine DNA glycosylase (198 aa).

The protein belongs to the DNA glycosylase MPG family.

In Natranaerobius thermophilus (strain ATCC BAA-1301 / DSM 18059 / JW/NM-WN-LF), this protein is Putative 3-methyladenine DNA glycosylase.